A 79-amino-acid polypeptide reads, in one-letter code: Toxin 3FTx-Oxy5 (79 aa).

The signal sequence occupies residues 1–23 (MKTLLLTLVVMTIVCLDLGYTLT). 4 cysteine pairs are disulfide-bonded: C24-C41, C34-C59, C63-C71, and C72-C77.

It belongs to the three-finger toxin family. Short-chain subfamily. Expressed by the venom gland.

It is found in the secreted. This is Toxin 3FTx-Oxy5 from Oxyuranus microlepidotus (Inland taipan).